We begin with the raw amino-acid sequence, 178 residues long: Protein GrpE (178 aa).

Residues 1-22 (MSENQNPSPSPEEIEAAMSANA) form a disordered region.

It belongs to the GrpE family. In terms of assembly, homodimer.

Its subcellular location is the cytoplasm. In terms of biological role, participates actively in the response to hyperosmotic and heat shock by preventing the aggregation of stress-denatured proteins, in association with DnaK and GrpE. It is the nucleotide exchange factor for DnaK and may function as a thermosensor. Unfolded proteins bind initially to DnaJ; upon interaction with the DnaJ-bound protein, DnaK hydrolyzes its bound ATP, resulting in the formation of a stable complex. GrpE releases ADP from DnaK; ATP binding to DnaK triggers the release of the substrate protein, thus completing the reaction cycle. Several rounds of ATP-dependent interactions between DnaJ, DnaK and GrpE are required for fully efficient folding. This chain is Protein GrpE, found in Acidovorax ebreus (strain TPSY) (Diaphorobacter sp. (strain TPSY)).